The sequence spans 296 residues: Phosphoribosylaminoimidazole-succinocarboxamide synthase (296 aa).

Belongs to the SAICAR synthetase family.

It catalyses the reaction 5-amino-1-(5-phospho-D-ribosyl)imidazole-4-carboxylate + L-aspartate + ATP = (2S)-2-[5-amino-1-(5-phospho-beta-D-ribosyl)imidazole-4-carboxamido]succinate + ADP + phosphate + 2 H(+). It functions in the pathway purine metabolism; IMP biosynthesis via de novo pathway; 5-amino-1-(5-phospho-D-ribosyl)imidazole-4-carboxamide from 5-amino-1-(5-phospho-D-ribosyl)imidazole-4-carboxylate: step 1/2. The chain is Phosphoribosylaminoimidazole-succinocarboxamide synthase from Geotalea uraniireducens (strain Rf4) (Geobacter uraniireducens).